We begin with the raw amino-acid sequence, 1197 residues long: SRC kinase signaling inhibitor 1 (1197 aa).

The span at 19-45 (AEGRARSPREEVGPRDPGGRGEPDPER) shows a compositional bias: basic and acidic residues. A disordered region spans residues 19–80 (AEGRARSPRE…GGSGGRRFSN (62 aa)). Phosphoserine is present on residues Ser47 and Ser52. Residues 65 to 75 (LGGGGSGGSGG) are compositionally biased toward gly residues. Ser79 bears the Phosphoserine mark. Phosphothreonine is present on Thr86. Phosphoserine is present on residues Ser87, Ser98, Ser178, Ser200, Ser204, Ser214, and Ser260. A Phosphotyrosine modification is found at Tyr276. Positions 319–415 (ASRESSPTRR…RRDVKPDEDL (97 aa)) are disordered. A compositionally biased stretch (polar residues) spans 321–331 (RESSPTRRLNN). Residues 332 to 341 (LSPASHLASS) show a composition bias toward low complexity. Phosphoserine is present on residues Ser333, Ser342, and Ser359. The span at 348–366 (PSGLPSGLPSGSPSRSRLS) shows a compositional bias: low complexity. 2 positions are modified to omega-N-methylarginine: Arg364 and Arg371. A phosphoserine mark is found at Ser378, Ser397, and Ser399. The segment covering 391-400 (PTSQGVSPSP) has biased composition (polar residues). Residues 404-415 (LERRDVKPDEDL) show a composition bias toward basic and acidic residues. The residue at position 431 (Tyr431) is a Phosphotyrosine. The interval 501-676 (GFRLPPSSPQ…AVSSTPAGQP (176 aa)) is disordered. Residues 520-531 (GGPPPPHSPYSG) show a composition bias toward pro residues. 3 positions are modified to phosphoserine: Ser527, Ser530, and Ser534. At Arg535 the chain carries Omega-N-methylarginine. Residues Ser537, Ser547, Ser549, Ser551, and Ser556 each carry the phosphoserine modification. Basic and acidic residues predominate over residues 595-607 (KDTETRERMEAME). Residues Ser631 and Ser655 each carry the phosphoserine modification. 2 positions are modified to phosphothreonine: Thr658 and Thr671. An interaction with SNAP25 region spans residues 681-731 (RLQMQMHLRGLQNSASDLRGQLQQLRKLQLQNQESVRALLKRTEAELSMRV). Coiled coils occupy residues 688 to 708 (LRGLQNSASDLRGQLQQLRKL) and 760 to 780 (EELITQQLNDLEKSVEKIQRD). Phosphoserine is present on residues Ser878 and Ser900. Disordered regions lie at residues 891-949 (GLDF…ERDW) and 983-1065 (DCAS…VVTS). Thr918 is subject to Phosphothreonine. Ser1021 is modified (phosphoserine). Residues 1036–1045 (KSPPPPPPRR) are compositionally biased toward pro residues. A phosphoserine mark is found at Ser1077 and Ser1094. A disordered region spans residues 1141-1163 (SRLKAAQGPAGSPDKGKHGKQRT).

Belongs to the SRCIN1 family. As to quaternary structure, interacts with BCAR1/p130Cas through its C-terminal domain and with CSK, CTTN and SRC. Also interacts with MAPRE3/EB3, SORBS3/vinexin and the N-terminal coiled-coil region of SNAP25. Post-translationally, tyrosine-phosphorylated in response to EGF and to cell adhesion to integrin ligands. Expressed exclusively in brain. Abundant in telencephalon and expressed moderately in cerebellum, hypothalamus, thalamus, superior and inferior colliculi, and olfactory bulb. No expression detected in medulla oblongata, spinal cord or pituitary gland. Enriched in the neuropil rather than soma in the thalamus, corpus striatum and cerebral cortex. Detected in astrocytes.

It is found in the cytoplasm. The protein resides in the cytoskeleton. It localises to the cell projection. The protein localises to the axon. Its subcellular location is the dendrite. It is found in the presynapse. The protein resides in the postsynapse. It localises to the postsynaptic density. Functionally, acts as a negative regulator of SRC by activating CSK which inhibits SRC activity and downstream signaling, leading to impaired cell spreading and migration. Regulates dendritic spine morphology. Involved in calcium-dependent exocytosis. May play a role in neurotransmitter release or synapse maintenance. In Rattus norvegicus (Rat), this protein is SRC kinase signaling inhibitor 1.